Consider the following 362-residue polypeptide: Atypical chemokine receptor 3 (362 aa).

The Extracellular portion of the chain corresponds to 1-40; it reads MDLHLFDYSEPGNFSDISWPCNSSDCIVVDTVMCPNMPNK. 3 N-linked (GlcNAc...) asparagine glycosylation sites follow: N13, N22, and N39. The helical transmembrane segment at 41 to 61 threads the bilayer; it reads SVLLYTLSFIYIFIFVIGMIA. Residues 62-81 are Cytoplasmic-facing; sequence NSVVVWVNIQAKTTGYDTHC. Residues 82–102 form a helical membrane-spanning segment; it reads YILNLAIADLWVVLTIPVWVV. The Extracellular portion of the chain corresponds to 103 to 118; the sequence is SLVQHNQWPMGELTCK. C117 and C196 are disulfide-bonded. Residues 119-139 traverse the membrane as a helical segment; the sequence is VTHLIFSINLFGSIFFLTCMS. Residues 140-162 are Cytoplasmic-facing; that stretch reads VDRYLSITYFTNTPSSRKKMVRR. A helical transmembrane segment spans residues 163–183; sequence VVCILVWLLAFCVSLPDTYYL. At 184–213 the chain is on the extracellular side; the sequence is KTVTSASNNETYCRSFYPEHSIKEWLIGME. A helical transmembrane segment spans residues 214-234; sequence LVSVVLGFAVPFSIIAVFYFL. Over 235 to 252 the chain is Cytoplasmic; sequence LARAISASSDQEKHSSRK. A helical transmembrane segment spans residues 253-273; the sequence is IIFSYVVVFLVCWLPYHVAVL. At 274-296 the chain is on the extracellular side; sequence LDIFSILHYIPFTCRLEHALFTA. A helical transmembrane segment spans residues 297-319; sequence LHVTQCLSLVHCCVNPVLYSFIN. Over 320 to 362 the chain is Cytoplasmic; it reads RNYRYELMKAFIFKYSAKTGLTKLIDASRVSETEYSALEQSTK. Residues 324–362 are C-terminal cytoplasmic tail; it reads YELMKAFIFKYSAKTGLTKLIDASRVSETEYSALEQSTK. 3 positions are modified to phosphoserine: S347, S350, and S355.

The protein belongs to the G-protein coupled receptor 1 family. Atypical chemokine receptor subfamily. Homodimer. Can form heterodimers with CXCR4; heterodimerization may regulate CXCR4 signaling activity. Interacts with ARRB1 and ARRB2. The Ser/Thr residues in the C-terminal cytoplasmic tail may be phosphorylated. Post-translationally, ubiquitinated at the Lys residues in its C-terminal cytoplasmic tail and is essential for correct trafficking from and to the cell membrane. Deubiquitinated by CXCL12-stimulation in a reversible manner. As to expression, expressed in monocytes, basophils, B-cells, umbilical vein endothelial cells (HUVEC) and B-lymphoblastoid cells. Lower expression detected in CD4+ T-lymphocytes and natural killer cells. In the brain, detected in endothelial cells and capillaries, and in mature neurons of the frontal cortex and hippocampus. Expressed in tubular formation in the kidney. Highly expressed in astroglial tumor endothelial, microglial and glioma cells. Expressed at low levels in normal CD34+ progenitor cells, but at very high levels in several myeloid malignant cell lines. Expressed in breast carcinomas but not in normal breast tissue (at protein level).

The protein resides in the cell membrane. It is found in the early endosome. The protein localises to the recycling endosome. Atypical chemokine receptor that controls chemokine levels and localization via high-affinity chemokine binding that is uncoupled from classic ligand-driven signal transduction cascades, resulting instead in chemokine sequestration, degradation, or transcytosis. Also known as interceptor (internalizing receptor) or chemokine-scavenging receptor or chemokine decoy receptor. Acts as a receptor for chemokines CXCL11 and CXCL12/SDF1. Chemokine binding does not activate G-protein-mediated signal transduction but instead induces beta-arrestin recruitment, leading to ligand internalization and activation of MAPK signaling pathway. Required for regulation of CXCR4 protein levels in migrating interneurons, thereby adapting their chemokine responsiveness. In glioma cells, transduces signals via MEK/ERK pathway, mediating resistance to apoptosis. Promotes cell growth and survival. Not involved in cell migration, adhesion or proliferation of normal hematopoietic progenitors but activated by CXCL11 in malignant hemapoietic cells, leading to phosphorylation of ERK1/2 (MAPK3/MAPK1) and enhanced cell adhesion and migration. Plays a regulatory role in CXCR4-mediated activation of cell surface integrins by CXCL12. Required for heart valve development. Regulates axon guidance in the oculomotor system through the regulation of CXCL12 levels. Functionally, (Microbial infection) Acts as a coreceptor with CXCR4 for a restricted number of HIV isolates. This is Atypical chemokine receptor 3 from Homo sapiens (Human).